The sequence spans 134 residues: Secretin (134 aa).

The signal sequence occupies residues 1–21 (MATRALLLLLLLPPLLLLAGC). The propeptide occupies 22–31 (AARPAPPRAP). Val59 carries the valine amide modification. Ser63 is subject to Phosphoserine. A propeptide spanning residues 63-134 (SQQDPENNTA…PAAEGSPMPP (72 aa)) is cleaved from the precursor.

This sequence belongs to the glucagon family.

It is found in the secreted. Functionally, hormone involved in different processes, such as regulation of the pH of the duodenal content, food intake and water homeostasis. Exerts its biological effects by binding to secretin receptor (SCTR), a G-protein coupled receptor expressed in the basolateral domain of several cells. Acts as a key gastrointestinal hormone by regulating the pH of the duodenal content. Secreted by S cells of the duodenum in the crypts of Lieberkuehn and regulates the pH of the duodenum by (1) inhibiting the secretion of gastric acid from the parietal cells of the stomach and (2) stimulating the production of bicarbonate (NaHCO(3)) from the ductal cells of the pancreas. Production of bicarbonate is essential to neutralize the pH and ensure no damage is done to the small intestine by the gastric acid. In addition to regulating the pH of the duodenal content, plays a central role in diet induced thermogenesis: acts as a non-sympathetic brown fat (BAT) activator mediating prandial thermogenesis, which consequentially induces satiation. Mechanistically, secretin released by the gut after a meal binds to secretin receptor (SCTR) in brown adipocytes, activating brown fat thermogenesis by stimulating lipolysis, which is sensed in the brain and promotes satiation. Also able to stimulate lipolysis in white adipocytes. Also plays an important role in cellular osmoregulation: released into the systemic circulation in response to hyperosmolality and acts at different levels in the hypothalamus, pituitary and kidney to regulate water homeostasis. Also plays a role in the central nervous system, possibly by acting as a neuropeptide hormone: required for hippocampal synaptic function and neural progenitor cells maintenance. In Sus scrofa (Pig), this protein is Secretin.